The following is a 308-amino-acid chain: MSAQKPGLHPRNRHQHRYDLAALCQTTPELTSFLIRTPAGEQSVDFANPQAVKALNKALLAHFYAVTHWDIPPGFLCPPVPGRADYIHHLADLLGETTGSIPAQATILDVGVGANCIYPLIGVHEYGWRFTGSEVSDAAMSSAQAIIQANTGLSRAIRLRRQKDPAAIFTGIIHKNEFYDATLCNPPFHDSAAAARAGSERKRRNLGQNKDDALNFGGQQQELWCEGGEVAFIKKMIAESQTFRRQVLWFTTLVSRGENLPPLYRALTEAGAVKVVKKEMAQGQKQSRFIAWTFMGDDQRRRFITRKR.

This sequence belongs to the methyltransferase superfamily. METTL16/RlmF family.

It localises to the cytoplasm. The enzyme catalyses adenosine(1618) in 23S rRNA + S-adenosyl-L-methionine = N(6)-methyladenosine(1618) in 23S rRNA + S-adenosyl-L-homocysteine + H(+). Its function is as follows. Specifically methylates the adenine in position 1618 of 23S rRNA. In Salmonella heidelberg (strain SL476), this protein is Ribosomal RNA large subunit methyltransferase F.